A 941-amino-acid polypeptide reads, in one-letter code: UvrABC system protein A (941 aa).

Residue 31 to 38 (GLSGSGKS) participates in ATP binding. Residues 253–280 (CPICGYSMRELEPRLFSFNNPAGACPTC) form a C4-type zinc finger. ABC transporter domains follow at residues 310–587 (WDRR…PESL) and 607–937 (ANPE…RFLK). Residue 640–647 (GVSGSGKS) participates in ATP binding. Residues 740–766 (CEACQGDGVIKVEMHFLPDIYVPCDQC) form a C4-type zinc finger.

This sequence belongs to the ABC transporter superfamily. UvrA family. In terms of assembly, forms a heterotetramer with UvrB during the search for lesions.

It is found in the cytoplasm. The UvrABC repair system catalyzes the recognition and processing of DNA lesions. UvrA is an ATPase and a DNA-binding protein. A damage recognition complex composed of 2 UvrA and 2 UvrB subunits scans DNA for abnormalities. When the presence of a lesion has been verified by UvrB, the UvrA molecules dissociate. The sequence is that of UvrABC system protein A from Salmonella typhi.